A 419-amino-acid polypeptide reads, in one-letter code: UDP-N-acetylglucosamine 1-carboxyvinyltransferase (419 aa).

A phosphoenolpyruvate-binding site is contributed by 22-23; the sequence is KN. Residue arginine 93 coordinates UDP-N-acetyl-alpha-D-glucosamine. Cysteine 117 serves as the catalytic Proton donor. Position 117 is a 2-(S-cysteinyl)pyruvic acid O-phosphothioketal (cysteine 117). Residues 122–126, aspartate 305, and isoleucine 327 contribute to the UDP-N-acetyl-alpha-D-glucosamine site; that span reads RPVDQ.

This sequence belongs to the EPSP synthase family. MurA subfamily.

It localises to the cytoplasm. It catalyses the reaction phosphoenolpyruvate + UDP-N-acetyl-alpha-D-glucosamine = UDP-N-acetyl-3-O-(1-carboxyvinyl)-alpha-D-glucosamine + phosphate. Its pathway is cell wall biogenesis; peptidoglycan biosynthesis. Its function is as follows. Cell wall formation. Adds enolpyruvyl to UDP-N-acetylglucosamine. The chain is UDP-N-acetylglucosamine 1-carboxyvinyltransferase from Dichelobacter nodosus (strain VCS1703A).